Here is a 136-residue protein sequence, read N- to C-terminus: Membrane-bound negative regulator YvrL (136 aa).

The next 4 membrane-spanning stretches (helical) occupy residues 18–38, 46–66, 83–103, and 106–126; these read LLAA…LFSL, AAHV…FEPF, LFIL…AHTT, and LISD…VFLI.

The protein localises to the cell membrane. Functionally, negatively regulates RNA polymerase sigma factor SigO-dependent transcription. Prevents the expression or secretion of OxdC under nonstress conditions. May act as an anti-sigma factor. This Bacillus subtilis (strain 168) protein is Membrane-bound negative regulator YvrL (yvrL).